The primary structure comprises 169 residues: Lutropin/choriogonadotropin subunit beta (169 aa).

The signal sequence occupies residues 1–20; that stretch reads MEMLQGLLLWMLLSVGGVWA. 6 cysteine pairs are disulfide-bonded: cysteine 29-cysteine 77, cysteine 43-cysteine 92, cysteine 46-cysteine 130, cysteine 54-cysteine 108, cysteine 58-cysteine 110, and cysteine 113-cysteine 120. The N-linked (GlcNAc...) asparagine glycan is linked to asparagine 33. A disordered region spans residues 131–169; that stretch reads APQASSSSKDPPSQPLTSTSTPTPGASNRSSHPLPIKTS. The segment covering 145–154 has biased composition (low complexity); that stretch reads PLTSTSTPTP. Residues 155-169 show a composition bias toward polar residues; sequence GASNRSSHPLPIKTS. N-linked (GlcNAc...) asparagine glycosylation is present at asparagine 158.

It belongs to the glycoprotein hormones subunit beta family. Heterodimer of a common alpha chain and a unique beta chain which confers biological specificity to thyrotropin, lutropin, follitropin and gonadotropin.

The protein resides in the secreted. Functionally, promotes spermatogenesis and ovulation by stimulating the testes and ovaries to synthesize steroids. The polypeptide is Lutropin/choriogonadotropin subunit beta (LHB) (Equus quagga burchellii (Burchell's zebra)).